We begin with the raw amino-acid sequence, 303 residues long: Diaminopimelate epimerase (303 aa).

Substrate is bound by residues N15, Q47, and N67. C76 functions as the Proton donor in the catalytic mechanism. Substrate is bound by residues 77-78 (GN), N163, N197, and 215-216 (ER). C224 (proton acceptor) is an active-site residue. 225 to 226 (GS) is a binding site for substrate. Positions 279 to 303 (DPATGEWSRDTQGLQGSGNADRGTA) are disordered.

Belongs to the diaminopimelate epimerase family. Homodimer.

Its subcellular location is the cytoplasm. The enzyme catalyses (2S,6S)-2,6-diaminopimelate = meso-2,6-diaminopimelate. It functions in the pathway amino-acid biosynthesis; L-lysine biosynthesis via DAP pathway; DL-2,6-diaminopimelate from LL-2,6-diaminopimelate: step 1/1. In terms of biological role, catalyzes the stereoinversion of LL-2,6-diaminopimelate (L,L-DAP) to meso-diaminopimelate (meso-DAP), a precursor of L-lysine and an essential component of the bacterial peptidoglycan. This is Diaminopimelate epimerase from Brucella canis (strain ATCC 23365 / NCTC 10854 / RM-666).